The primary structure comprises 860 residues: Ubiquitin fusion degradation protein 3 homolog (860 aa).

6 WD repeats span residues 27-65 (AHKS…YTKT), 71-112 (PKGI…PYAI), 115-154 (EHKQ…SSSF), 163-203 (GHTL…SVFK), 204-242 (GHTD…ILRK), and 244-283 (ATQA…DGNL). Positions 397–497 (PIHYLEEITR…DKLSKGAASA (101 aa)) constitute a PFU domain. The tract at residues 494–585 (AASAQSGYED…LPQNKKKPRG (92 aa)) is disordered. The 271-residue stretch at 586-856 (PLVPVPDFYI…KNIARDIVEM (271 aa)) folds into the PUL domain.

It belongs to the WD repeat PLAP family. In terms of assembly, interacts with cdc-48.1. In terms of tissue distribution, expressed in intestine (at protein level).

The protein resides in the cytoplasm. Functionally, plays a role in protein ubiquitination, sorting and degradation through its association with cdc-48.1 and/or cdc-48.2. In Caenorhabditis elegans, this protein is Ubiquitin fusion degradation protein 3 homolog.